The following is a 620-amino-acid chain: tRNA uridine 5-carboxymethylaminomethyl modification enzyme MnmG (620 aa).

FAD-binding positions include 13–18 (GGGHAG), Val-125, and Ser-182. 280 to 294 (GPRYCPSVEDKIVKF) is a binding site for NAD(+). Residue Asn-377 participates in FAD binding.

The protein belongs to the MnmG family. In terms of assembly, homodimer. Heterotetramer of two MnmE and two MnmG subunits. It depends on FAD as a cofactor.

It localises to the cytoplasm. NAD-binding protein involved in the addition of a carboxymethylaminomethyl (cmnm) group at the wobble position (U34) of certain tRNAs, forming tRNA-cmnm(5)s(2)U34. The polypeptide is tRNA uridine 5-carboxymethylaminomethyl modification enzyme MnmG (Sulfurihydrogenibium sp. (strain YO3AOP1)).